The following is a 251-amino-acid chain: Insertion sequence IS5376 putative ATP-binding protein (251 aa).

Gly105–Thr112 provides a ligand contact to ATP.

Belongs to the IS21/IS1162 putative ATP-binding protein family.

The sequence is that of Insertion sequence IS5376 putative ATP-binding protein from Geobacillus stearothermophilus (Bacillus stearothermophilus).